The following is a 78-amino-acid chain: D-alanyl carrier protein (78 aa).

The Carrier domain occupies 1–77 (MDLKEQIVEI…KVVAKVESLI (77 aa)). Residue Ser35 is modified to O-(pantetheine 4'-phosphoryl)serine.

Belongs to the DltC family. Post-translationally, 4'-phosphopantetheine is transferred from CoA to a specific serine of apo-DCP.

The protein resides in the cytoplasm. It functions in the pathway cell wall biogenesis; lipoteichoic acid biosynthesis. Carrier protein involved in the D-alanylation of lipoteichoic acid (LTA). The loading of thioester-linked D-alanine onto DltC is catalyzed by D-alanine--D-alanyl carrier protein ligase DltA. The DltC-carried D-alanyl group is further transferred to cell membrane phosphatidylglycerol (PG) by forming an ester bond, probably catalyzed by DltD. D-alanylation of LTA plays an important role in modulating the properties of the cell wall in Gram-positive bacteria, influencing the net charge of the cell wall. This is D-alanyl carrier protein from Leuconostoc mesenteroides subsp. mesenteroides (strain ATCC 8293 / DSM 20343 / BCRC 11652 / CCM 1803 / JCM 6124 / NCDO 523 / NBRC 100496 / NCIMB 8023 / NCTC 12954 / NRRL B-1118 / 37Y).